Here is a 77-residue protein sequence, read N- to C-terminus: MDYQRLLFLFAVAMVITTTVALPKDTALMDGQLQKRGTPCKCHGYIGVYWFMLAGCPNGYGYNLSCPYFLGICCVKK.

The N-terminal stretch at 1–21 (MDYQRLLFLFAVAMVITTTVA) is a signal peptide. Residues 22 to 34 (LPKDTALMDGQLQ) constitute a propeptide that is removed on maturation. Cystine bridges form between Cys-40-Cys-73, Cys-42-Cys-66, and Cys-56-Cys-74. A Methionine sulfoxide; partial modification is found at Met-52.

Belongs to the sea anemone type 3 (BDS) potassium channel toxin family. In terms of processing, toxin occurs in two forms in the mucus, Hmg 1b-2 which is not oxidized and Hmg 1b-2 MetOx which is oxidized at Met-52.

Its subcellular location is the secreted. It localises to the nematocyst. Its function is as follows. The non-oxidized toxin is remarkably non-selective with activity on many different ion channels. Weakly and reversibly inhibits rat and human homomeric ASIC1 (isoform ASIC1a) (IC(50)=4.8 uM, and IC(50)=14.6 uM), and ASIC3 (IC(50)=15.9 uM). Molecular modeling interaction with ASIC1a suggests that this peptide hinders the collapse of acidic pockets and stabilizes nonconducting channels state. It activates several potassium channels including Kv1.1/KCNA1, Kv1.2/KCNA2, and drosophila Shaker IR. It moderately to potently inhibits potassium channels including Kv1.3/KCNA3, Kv1.4/KCNA4, Kv1.5/KCNA5, Kv1.6/KCNA6, Kv2.1/KCNB1, Kv4.2/KCND2, Kv7.1/KCNQ1, Kv7.2/Kv7.3 (KCNQ2/KCNQ3), Kv7.4/KCNQ4, hERG/KCNH2, and C.elegans QKT1. On sodium channels, it moderately to potently inhibits Nav1.1/SCN1A, Nav1.2/SCN2A, Nav1.3/SCN3A, Nav1.4/SCN4A, Nav1.5/SCN5A, Nav1.6/SCN8A, Nav1.7/SCN9A, Nav1.8/SCN10A, and B.germanica BgNav. It also moderately to potently inhibits Cav3.1/CACNA1G, Cav3.2/CACNA1H, and Cav3.3/CACNA1I. Significant shifts in the voltage-current relationship are observed on Kv and Nav, depending on the channel isoform, whereas the toxin does not seem to modulate the voltage-sensor domains of Cav channels, acting mainly as a pore blocker. Does not activate nicotinic acetylcholine receptors (nAChR), but potentiates ACh-elicited current of human alpha-7/CHRNA7 nAChR. Is also able to bind T.californica muscle-type nAChRs. In vivo, causes an excitatory effect in mice behavior. Also shows antihyperalgesic and analgesic activity in the acid-induced muscle pain mice model, and weak anti-inflammatory effect in models of acute local inflammation. Functionally, forms an oxidized toxin derivative (Hmg 1b-2 MetOx). Able to bind T.californica muscle-type nAChRs (alpha-1-beta-1-delta-epsilon (CHRNA1-CHRNB1-CHRND-CHRNE)). This chain is Pi/alpha-stichotoxin-Hmg5b, found in Heteractis magnifica (Magnificent sea anemone).